A 132-amino-acid polypeptide reads, in one-letter code: Chemokine-like protein TAFA-5 (132 aa).

Positions Met1–Gly43 are cleaved as a signal peptide. Asn113 carries an N-linked (GlcNAc...) asparagine glycan.

The protein belongs to the TAFA family. Expressed in the subcutaneous, brown, epididymal and perirenal adipose tissue (at protein level).

The protein resides in the secreted. Its function is as follows. Acts as a chemokine-like protein by regulating cell proliferation and migration through activation of G protein-coupled receptors (GPCRs), such as S1PR2 and FPR2. Stimulates chemotactic migration of macrophages mediated by the MAPK3/ERK1 and AKT1 pathway. Blocks TNFSF11/RANKL-induced osteoclast formation from macrophages by inhibiting up-regulation of osteoclast fusogenic and differentiation genes. Stimulation of macrophage migration and inhibition of osteoclast formation is mediated through the GPCR FPR2. Acts as an adipokine by negatively regulating vascular smooth muscle cell (VSMC) proliferation and migration in response to platelet-derived growth factor stimulation via GPCR S1PR2 and G protein GNA12/GNA13-transmitted RHOA signaling. Inhibits injury-induced cell proliferation and neointima formation in the femoral arteries. The protein is Chemokine-like protein TAFA-5 (Tafa5) of Mus musculus (Mouse).